Here is an 804-residue protein sequence, read N- to C-terminus: SH3-containing GRB2-like protein 3-interacting protein 1 (804 aa).

Disordered regions lie at residues 1-90 (MMEG…EESH), 124-181 (LSPS…GPPL), and 199-254 (IWGS…QSAT). Over residues 16-34 (RKKEKDTDSTGSPDRDGIK) the composition is skewed to basic and acidic residues. Ser-54, Ser-80, Ser-81, Ser-83, Ser-125, Ser-127, Ser-132, and Ser-145 each carry phosphoserine. Thr-156 and Thr-158 each carry phosphothreonine. Ser-212 carries the phosphoserine modification. Positions 221–236 (TGTPPPLPPKNVPATP) are enriched in pro residues. Phosphothreonine occurs at positions 223 and 235. Residues Ser-241, Ser-263, Ser-276, Ser-292, and Ser-295 each carry the phosphoserine modification. Basic and acidic residues predominate over residues 289-309 (VHFSDTSPEHVTPELTPREKV). A disordered region spans residues 289–500 (VHFSDTSPEH…LSAATTPTVE (212 aa)). Thr-300 and Thr-304 each carry phosphothreonine. The segment covering 322 to 346 (SPAPGPLGPPGPTGPPGPPGPPRNV) has biased composition (pro residues). Ser-348 carries the post-translational modification Phosphoserine. The segment covering 354–369 (EVQKKVAEQTFIKDDY) has biased composition (basic and acidic residues). At Ser-375 the chain carries Phosphoserine. Thr-386 is subject to Phosphothreonine. Low complexity predominate over residues 413 to 432 (TSGASSPARPATPLLPCSST). The segment covering 433–451 (TPPPPPPRPPSRPKLPPGK) has biased composition (pro residues). Low complexity-rich tracts occupy residues 458–468 (SRPFSPPIHSS) and 475–498 (PLAR…TTPT). Ser-462 carries the phosphoserine modification. An MHD domain is found at 535–803 (TLPVAAAFTE…RFAAGKYLAD (269 aa)). 4 interaction with DPF motifs-containing proteins regions span residues 537 to 543 (PVAAAFT), 569 to 571 (SFP), 643 to 646 (TYYN), and 789 to 794 (SLIKKR). Positions 625–804 (MPNLMTHLKK…FAAGKYLADN (180 aa)) are necessary and sufficient to mediate interaction with CANX.

Interacts with proteins essential or regulating the formation of functional clathrin-coated pits. Interacts with CANX. Interacts with AP2A1. Interacts with EPS15. Interacts with SH3GL3. Interacts with AMPH. Interacts with ITSN1 (via SH3 domains). Interacts with and REPS1.

It localises to the membrane. It is found in the clathrin-coated pit. Functionally, may function in clathrin-mediated endocytosis. Has both a membrane binding/tubulating activity and the ability to recruit proteins essential to the formation of functional clathrin-coated pits. Has a preference for membranes enriched in phosphatidylserine and phosphoinositides and is required for the endocytosis of the transferrin receptor. May also bind tubulin. May play a role in the regulation of energy homeostasis. This Pongo abelii (Sumatran orangutan) protein is SH3-containing GRB2-like protein 3-interacting protein 1 (SGIP1).